The primary structure comprises 93 residues: Sm-like protein LSM2 (93 aa).

The 75-residue stretch at 2-76 (LFFSYFKDLV…VRYVQLPKDG (75 aa)) folds into the Sm domain.

This sequence belongs to the snRNP Sm proteins family. In terms of assembly, component of the heptameric LSM1-LSM7 complex that forms a seven-membered ring structure with a donut shape. The LSM subunits are arranged in the order LSM1, LSM2, LSM3, LSM6, LSM5, LSM7 and LSM4. LSM2 subunit interacts only with its two neighboring subunits, LSM1A or LSM1B and LSM3A or LSM3B. Component of the heptameric LSM2-LSM8 complex that forms a seven-membered ring structure with a donut shape. The LSM subunits are arranged in the order LSM8, LSM2, LSM3, LSM6, LSM5, LSM7 and LSM4. LSM2 subunit interacts only with its two neighboring subunits, LSM8 and LSM3A or LSM3B. Expressed in roots, leaves, stems, flowers and siliques.

It localises to the cytoplasm. The protein localises to the nucleus. In terms of biological role, component of LSM protein complexes, which are involved in RNA processing. Component of the cytoplasmic LSM1-LSM7 complex which is involved in mRNA degradation by promoting decapping and leading to accurate 5'-3' mRNA decay. The cytoplasmic LSM1-LSM7 complex regulates developmental gene expression by the decapping of specific development-related transcripts. Component of the nuclear LSM2-LSM8 complex which is involved splicing nuclear mRNAs. LSM2-LSM8 binds directly to the U6 small nuclear RNAs (snRNAs) and is essential for accurate splicing of selected development-related mRNAs through the stabilization of the spliceosomal U6 snRNA. Plays a critical role in the regulation of development-related gene expression. The protein is Sm-like protein LSM2 of Arabidopsis thaliana (Mouse-ear cress).